We begin with the raw amino-acid sequence, 174 residues long: Male-enhanced antigen 1 (174 aa).

2 disordered regions span residues 1–83 and 95–123; these read MAAV…DGAA and HLPDPPLESEDEDEEGAAALSSHSSIPMD. Acidic residues-rich tracts occupy residues 38 to 48, 65 to 82, and 101 to 110; these read SSEEPEEEQEE, PEQEEVELAPVGEGEDGA, and LESEDEDEEG. A Phosphoserine modification is found at Ser103.

Highly expressed in testis. Transcripts can be found in primary and secondary spermatocytes, and spermatids, but the protein itself is only detected in spermatids. No expression in Leydig cells, spermatogonia, or sperm. Very weak expression in the heart, kidney, spleen, thymus and ovary.

Functionally, may play an important role in spermatogenesis and/or testis development. This Mus musculus (Mouse) protein is Male-enhanced antigen 1 (Mea1).